Consider the following 194-residue polypeptide: dCTP deaminase (194 aa).

DCTP contacts are provided by residues 110–115, Asp-128, 136–138, Tyr-171, Lys-178, and Gln-182; these read RSSLAR and VLE. Glu-138 serves as the catalytic Proton donor/acceptor. Residues 172–194 are disordered; it reads NKRKSAKYRDQQEAVASRISQDK.

This sequence belongs to the dCTP deaminase family. As to quaternary structure, homotrimer.

It catalyses the reaction dCTP + H2O + H(+) = dUTP + NH4(+). The protein operates within pyrimidine metabolism; dUMP biosynthesis; dUMP from dCTP (dUTP route): step 1/2. Functionally, catalyzes the deamination of dCTP to dUTP. The polypeptide is dCTP deaminase (Shewanella loihica (strain ATCC BAA-1088 / PV-4)).